Consider the following 506-residue polypeptide: Methylthioalkylmalate synthase 1, chloroplastic (506 aa).

The transit peptide at Met1–Cys49 directs the protein to the chloroplast. The Pyruvate carboxyltransferase domain maps to Val85–Met359. Position 98 is a phosphoserine (Ser98).

Belongs to the alpha-IPM synthase/homocitrate synthase family. Monomer. Mn(2+) is required as a cofactor. Highly expressed in leaves, flowers, roots and siliques. Not detected in flowers in PubMed:12432038.

Its subcellular location is the plastid. It is found in the chloroplast. It carries out the reaction an omega-(methylsulfanyl)-2-oxoalkanoate + acetyl-CoA + H2O = a 2-(omega-methylsulfanyl)alkylmalate + CoA + H(+). With respect to regulation, 1 mM DTT required for activity. Activated by ATP and inhibited by iodoacetamide. Functionally, determines the side chain length of aliphatic glucosinolate structures. Catalyzes exclusively the condensation reactions of both the first and second methionine carbon chain elongation. This is Methylthioalkylmalate synthase 1, chloroplastic (MAM1) from Arabidopsis thaliana (Mouse-ear cress).